A 545-amino-acid polypeptide reads, in one-letter code: Probable protein kinase UbiB (545 aa).

Positions 123 to 501 constitute a Protein kinase domain; the sequence is DFEPIALASA…QIKQRQSQYL (379 aa). Residues 129-137 and Lys-152 each bind ATP; that span reads LASASIAQV. Catalysis depends on Asp-287, which acts as the Proton acceptor. A helical transmembrane segment spans residues 508-528; the sequence is LFLCGSLFLLSGLANIPWLFI.

This sequence belongs to the ABC1 family. UbiB subfamily.

It is found in the cell inner membrane. Its pathway is cofactor biosynthesis; ubiquinone biosynthesis [regulation]. Is probably a protein kinase regulator of UbiI activity which is involved in aerobic coenzyme Q (ubiquinone) biosynthesis. The chain is Probable protein kinase UbiB from Photorhabdus laumondii subsp. laumondii (strain DSM 15139 / CIP 105565 / TT01) (Photorhabdus luminescens subsp. laumondii).